We begin with the raw amino-acid sequence, 334 residues long: tRNA dimethylallyltransferase (334 aa).

Glycine 22–threonine 29 contributes to the ATP binding site. Position 24–29 (threonine 24–threonine 29) interacts with substrate.

The protein belongs to the IPP transferase family. In terms of assembly, monomer. Mg(2+) is required as a cofactor.

The enzyme catalyses adenosine(37) in tRNA + dimethylallyl diphosphate = N(6)-dimethylallyladenosine(37) in tRNA + diphosphate. Catalyzes the transfer of a dimethylallyl group onto the adenine at position 37 in tRNAs that read codons beginning with uridine, leading to the formation of N6-(dimethylallyl)adenosine (i(6)A). The protein is tRNA dimethylallyltransferase of Rhodopirellula baltica (strain DSM 10527 / NCIMB 13988 / SH1).